Here is a 229-residue protein sequence, read N- to C-terminus: Protein fmp52-2, mitochondrial (229 aa).

The transit peptide at 1–44 directs the protein to the mitochondrion; that stretch reads MTAAAVFGCTGAVGSQILATLLASDAFSSVATVSRKLPTAESPK.

It belongs to the FMP52 family.

It is found in the mitochondrion outer membrane. The chain is Protein fmp52-2, mitochondrial (fmp522) from Aspergillus terreus (strain NIH 2624 / FGSC A1156).